Here is a 206-residue protein sequence, read N- to C-terminus: Ribonuclease HII (206 aa).

Residues Gly18–Ser206 form the RNase H type-2 domain. 3 residues coordinate a divalent metal cation: Asp24, Glu25, and Asp116.

This sequence belongs to the RNase HII family. It depends on Mn(2+) as a cofactor. Mg(2+) is required as a cofactor.

The protein resides in the cytoplasm. It catalyses the reaction Endonucleolytic cleavage to 5'-phosphomonoester.. Endonuclease that specifically degrades the RNA of RNA-DNA hybrids. The sequence is that of Ribonuclease HII from Shewanella amazonensis (strain ATCC BAA-1098 / SB2B).